The sequence spans 476 residues: MKILFAAAEGAPFSKTGGLGDVIGALPKSLVKAGHEVGVILPYYDMTHAKFGDQVEDLFYFEVSVGWRRQYVGVKRLVLNGVSFYFIDNQHYFFRGHVYGDFDDGERFAYFQLAAVELMERIDFIPDVLHVHDYHTAMIPFLVKEKYHWIQAYQNITTVLTIHNLEFQGQFPDSMLWELFGVGYERYADGTLRWNDCLNWMKAGILYADRVTTVSPSYASEIRTPEFGCNLDQILRMESGKLVGIVNGIDTDIYNPETDPLLAHHFDKSDLSGKLENKRALQERVGLPVRDDVPVVGIVSRLTRQKGFDLVVEELHNLLQEDVQIILLGTGDPAFEQAFAWFGHAYPDKLSANILFDVTLAQEIYAASDIFLMPSRFEPCGLSQMMAMRYGTLPLVHEVGGLRDTVEPYNVYTGKGTGFSFNNFSGYWLTWTFKEALKLYADDKEAWKSLQEQAMERDFSWDTASKAYSDLYQSLL.

K15 serves as a coordination point for ADP-alpha-D-glucose.

This sequence belongs to the glycosyltransferase 1 family. Bacterial/plant glycogen synthase subfamily.

It carries out the reaction [(1-&gt;4)-alpha-D-glucosyl](n) + ADP-alpha-D-glucose = [(1-&gt;4)-alpha-D-glucosyl](n+1) + ADP + H(+). It participates in glycan biosynthesis; glycogen biosynthesis. Synthesizes alpha-1,4-glucan chains using ADP-glucose. This Streptococcus sanguinis (strain SK36) protein is Glycogen synthase.